Consider the following 1245-residue polypeptide: ABC transporter B family member 13 (1245 aa).

Residues 1–14 (MDNTERSSNGNIQA) show a composition bias toward polar residues. A disordered region spans residues 1–20 (MDNTERSSNGNIQAETEAKE). An ABC transmembrane type-1 1 domain is found at 47–336 (MLLGGLGACI…AAPSLSAIAK (290 aa)). A helical transmembrane segment spans residues 48 to 68 (LLGGLGACIHGATLPLFFVFF). Asn-77 is a glycosylation site (N-linked (GlcNAc...) asparagine). The next 5 helical transmembrane spans lie at 94–114 (LYLV…VSCW), 171–191 (HVLR…LSVW), 195–215 (LLTL…AIVM), 276–296 (LGVG…LWYA), and 314–334 (ILNV…LSAI). N-linked (GlcNAc...) asparagine glycosylation is found at Asn-351 and Asn-391. An ABC transporter 1 domain is found at 372–607 (IEFQKVSFAY…GGDYATLVNC (236 aa)). ATP is bound at residue 406–413 (GPSGSGKS). A compositionally biased stretch (polar residues) spans 610–629 (TEPQENSRSIMSETCKSQAG). Residues 610 to 660 (TEPQENSRSIMSETCKSQAGSSSSRRVSSSRRTSSFRVDQEKTKNDDSKKD) are disordered. Positions 630-646 (SSSSRRVSSSRRTSSFR) are enriched in low complexity. Basic and acidic residues predominate over residues 647-660 (VDQEKTKNDDSKKD). In terms of domain architecture, ABC transmembrane type-1 2 spans 681 to 969 (ALLGSIGAVL…TLALTPDIVK (289 aa)). Transmembrane regions (helical) follow at residues 686-706 (IGAV…AYVL) and 725-745 (AIIF…QHYF). Asn-778 carries N-linked (GlcNAc...) asparagine glycosylation. 4 helical membrane-spanning segments follow: residues 805–822 (IVQN…AFFY), 828–848 (AVVT…QLFL), 913–933 (LSQF…SVLI), and 947–967 (FMVL…TPDI). The ABC transporter 2 domain occupies 1004–1240 (IEFRNVSFVY…PNGFYKQLTS (237 aa)). N-linked (GlcNAc...) asparagine glycosylation occurs at Asn-1008. 1039-1046 (GPSGSGKS) contacts ATP. N-linked (GlcNAc...) asparagine glycosylation occurs at Asn-1106.

Belongs to the ABC transporter superfamily. ABCB family. Multidrug resistance exporter (TC 3.A.1.201) subfamily.

It localises to the membrane. In Arabidopsis thaliana (Mouse-ear cress), this protein is ABC transporter B family member 13 (ABCB13).